We begin with the raw amino-acid sequence, 235 residues long: Small ribosomal subunit protein uS2c (235 aa).

It belongs to the universal ribosomal protein uS2 family.

The protein resides in the plastid. It localises to the chloroplast. This is Small ribosomal subunit protein uS2c (rps2) from Marchantia polymorpha (Common liverwort).